The following is an 89-amino-acid chain: UPF0297 protein OB2008 (89 aa).

The protein belongs to the UPF0297 family.

The chain is UPF0297 protein OB2008 from Oceanobacillus iheyensis (strain DSM 14371 / CIP 107618 / JCM 11309 / KCTC 3954 / HTE831).